The primary structure comprises 237 residues: Cysteine-rich venom protein DIS1 (237 aa).

The signal sequence occupies residues 1-18; that stretch reads MFVFILLSLAAVLQQSFG. An SCP domain is found at 37–165; that stretch reads VDKHNAFRRS…SYNYFYVCQY (129 aa). Disulfide bonds link Cys74–Cys152, Cys91–Cys166, Cys147–Cys163, Cys185–Cys192, Cys188–Cys197, Cys201–Cys234, and Cys219–Cys232. The region spanning 201–234 is the ShKT domain; the sequence is CSREDVFMNCKSLVAQSNCQDDYIRKNCPATCFC.

The protein belongs to the CRISP family. In terms of tissue distribution, expressed by the venom gland.

The protein resides in the secreted. In terms of biological role, weakly blocks contraction of smooth muscle elicited by high potassium-induced depolarization, but does not block caffeine-stimulated contraction. May target voltage-gated calcium channels on smooth muscle. The chain is Cysteine-rich venom protein DIS1 from Dispholidus typus (Boomslang).